Consider the following 284-residue polypeptide: Tropomyosin (284 aa).

Positions 1 to 284 (MEAIKKKMQA…DQTFAELTGY (284 aa)) form a coiled coil.

The protein belongs to the tropomyosin family. Homodimer.

In terms of biological role, tropomyosin, in association with the troponin complex, plays a central role in the calcium dependent regulation of muscle contraction. The sequence is that of Tropomyosin from Dermatophagoides farinae (American house dust mite).